The sequence spans 502 residues: Cysteine protease RavZ (502 aa).

Short sequence motifs (LIR) lie at residues 9-23 (DKLI…GEQE) and 23-37 (ESDI…GDEK). The tract at residues 49–325 (SIYPPETSWE…ESALTEGKTL (277 aa)) is catalytic region. Residues His176 and Asp197 contribute to the active site. The interval 211-217 (YFKGKYR) is alpha-3 helix. Residue Cys258 is part of the active site. The interval 326-431 (PVQLSEFIVA…VLPCVKFDDT (106 aa)) is membrane targeting region. Residues 429–443 (DDTIDDFVTIEKDEL) carry the LIR 3 motif.

It localises to the secreted. Its subcellular location is the host cytoplasmic vesicle membrane. It catalyses the reaction [protein]-C-terminal L-amino acid-glycyl-phosphatidylethanolamide + H2O = a 1,2-diacyl-sn-glycero-3-phosphoethanolamine-N-glycine + [protein]-C-terminal &lt;stereo&gt;L-&lt;/stereo&gt;amino acid. It carries out the reaction [protein]-C-terminal L-amino acid-glycyl-phosphatidylserine + H2O = 1,2-diacyl-sn-glycero-3-phospho-L-serine-N-glycine + [protein]-C-terminal &lt;stereo&gt;L-&lt;/stereo&gt;amino acid. Its function is as follows. Cysteine protease effector that inhibits host cell autophagy by targeting lipid-conjugated ATG8 family proteins on pre-autophagosomal structures. Specifically hydrolyzes the amide bond between the C-terminal glycine residue and an adjacent aromatic residue in ATG8 proteins conjugated to phosphatidylethanolamine (PE), producing an ATG8 protein that cannot be reconjugated by host ATG7 and ATG3. Mechanistically, Ravz interacts with ATG8 proteins conjugated to PE via its LIR motifs, extracts them from the membrane of autophagosomes and integrates the PE part into its own lipid-binding site. It then removes the lipid component of the ATG8 protein. Also able to mediate delipidation of ATG8 proteins conjugated to phosphatidylserine (PS) during non-canonical autophagy. Inhibits host ubiquitin recruitment to bacteria-containing vacuoles, suggesting that it is able to mediate delipidation of other proteins in addition to ATG8 proteins. It is however not involved in the exclusion of autophagy adapters from bacteria-containing vacuoles decorated with ubiquitin. This is Cysteine protease RavZ from Legionella pneumophila subsp. pneumophila (strain Philadelphia 1 / ATCC 33152 / DSM 7513).